The chain runs to 146 residues: Large ribosomal subunit protein uL15 (146 aa).

Over residues 1-13 (MKLHELKPAEGSR) the composition is skewed to basic and acidic residues. Residues 1-57 (MKLHELKPAEGSRKVRNRVGRGTSSGNGKTSGRGQKGQKARSGVGLRPGFEGGQTPL) form a disordered region. A compositionally biased stretch (gly residues) spans 23–35 (TSSGNGKTSGRGQ).

Belongs to the universal ribosomal protein uL15 family. As to quaternary structure, part of the 50S ribosomal subunit.

Binds to the 23S rRNA. This Streptococcus thermophilus (strain ATCC BAA-491 / LMD-9) protein is Large ribosomal subunit protein uL15.